Here is a 98-residue protein sequence, read N- to C-terminus: UPF0251 protein Sputw3181_3483 (98 aa).

This sequence belongs to the UPF0251 family.

This is UPF0251 protein Sputw3181_3483 from Shewanella sp. (strain W3-18-1).